The chain runs to 126 residues: MARVKRAVNAQKKRRSILEASKGYRGQRSRLYRKAKEQQLHSLTYAYRDRRARKGDFRKLWIARINAAARLNDITYNRFIQGLKAAGVEVDRKNLAELAVSDAEAFAGLVAIAKAALPQDVNAPAA.

The protein belongs to the bacterial ribosomal protein bL20 family.

Functionally, binds directly to 23S ribosomal RNA and is necessary for the in vitro assembly process of the 50S ribosomal subunit. It is not involved in the protein synthesizing functions of that subunit. The polypeptide is Large ribosomal subunit protein bL20 (Nocardia farcinica (strain IFM 10152)).